Reading from the N-terminus, the 1349-residue chain is Patatin-like phospholipase domain-containing protein 7 (1349 aa).

The Lumenal portion of the chain corresponds to 1-36; sequence MQKEEDVCPEAGYCLGTALSSWGLHFMEEHSQSTML. Residues 37-57 traverse the membrane as a helical segment; the sequence is MGIGIGVLLTLAFVGLAAFFV. Topologically, residues 58–1349 are cytoplasmic; that stretch reads YRKVSRFRRA…DQGPRLYRPS (1292 aa). 170 to 297 contacts a nucleoside 3',5'-cyclic phosphate; that stretch reads VLGHFEKPLF…VRVVQIIMVR (128 aa). Positions 340 to 361 are disordered; that stretch reads MSYGPEEQLERSPRLSEFNSSD. 2 positions are modified to phosphoserine: Ser-341 and Ser-377. Residues 496–599 and 610–715 each bind a nucleoside 3',5'-cyclic phosphate; these read FLHV…VVRR and ALDW…LGEK. Positions 678-964 are involved in the binding to lipid droplets; it reads VHAVRDSELA…RGCAQVGILR (287 aa). The 167-residue stretch at 947–1113 folds into the PNPLA domain; the sequence is LVLGGGGARG…INNLPADVAR (167 aa). The GXGXXG signature appears at 951-956; sequence GGGARG. The GXSXG motif lies at 978-982; that stretch reads GTSIG. The active-site Nucleophile is Ser-980. Asp-1100 (proton acceptor) is an active-site residue. The DGA/G signature appears at 1100–1102; that stretch reads DGG. Residue Ser-1277 is modified to Phosphoserine. Position 1281 is a phosphothreonine (Thr-1281). Residues 1297–1349 form a disordered region; it reads DFQSTGIELDSDSECEPSMSQGPHSLTSPKQSQDSFPWLPNQDDQGPRLYRPS. The span at 1314–1331 shows a compositional bias: polar residues; it reads SMSQGPHSLTSPKQSQDS.

Belongs to the NTE family. As to expression, expressed in the brain, liver, kidney, lung and testis.

It is found in the endoplasmic reticulum membrane. The protein localises to the lipid droplet. It catalyses the reaction a 1-acyl-sn-glycero-3-phosphocholine + H2O = sn-glycerol 3-phosphocholine + a fatty acid + H(+). The catalysed reaction is 1-(9Z-octadecenoyl)-sn-glycero-3-phosphocholine + H2O = sn-glycerol 3-phosphocholine + (9Z)-octadecenoate + H(+). It carries out the reaction 1-(9Z-octadecenoyl)-sn-glycero-3-phosphoethanolamine + H2O = sn-glycero-3-phosphoethanolamine + (9Z)-octadecenoate + H(+). The enzyme catalyses 1-(9Z-octadecenoyl)-sn-glycero-3-phospho-L-serine + H2O = sn-glycero-3-phospho-L-serine + (9Z)-octadecenoate + H(+). It catalyses the reaction 1-hexadecanoyl-sn-glycero-3-phosphocholine + H2O = sn-glycerol 3-phosphocholine + hexadecanoate + H(+). The catalysed reaction is 1-hexadecanoyl-sn-glycero-3-phosphate + H2O = sn-glycerol 3-phosphate + hexadecanoate + H(+). Functionally, lysophospholipase which preferentially deacylates unsaturated lysophosphatidylcholine (C18:1), generating glycerophosphocholine. Also can deacylate, to a lesser extent, lysophosphatidylethanolamine (C18:1), lysophosphatidyl-L-serine (C18:1) and lysophosphatidic acid (C16:0). This is Patatin-like phospholipase domain-containing protein 7 (Pnpla7) from Rattus norvegicus (Rat).